A 242-amino-acid chain; its full sequence is 1-(5-phosphoribosyl)-5-[(5-phosphoribosylamino)methylideneamino] imidazole-4-carboxamide isomerase (242 aa).

Residue Asp-8 is the Proton acceptor of the active site. Asp-129 acts as the Proton donor in catalysis.

Belongs to the HisA/HisF family.

The protein resides in the cytoplasm. It carries out the reaction 1-(5-phospho-beta-D-ribosyl)-5-[(5-phospho-beta-D-ribosylamino)methylideneamino]imidazole-4-carboxamide = 5-[(5-phospho-1-deoxy-D-ribulos-1-ylimino)methylamino]-1-(5-phospho-beta-D-ribosyl)imidazole-4-carboxamide. It participates in amino-acid biosynthesis; L-histidine biosynthesis; L-histidine from 5-phospho-alpha-D-ribose 1-diphosphate: step 4/9. The sequence is that of 1-(5-phosphoribosyl)-5-[(5-phosphoribosylamino)methylideneamino] imidazole-4-carboxamide isomerase from Clostridium botulinum (strain Langeland / NCTC 10281 / Type F).